The sequence spans 401 residues: Beta-ketoadipyl-CoA thiolase (401 aa).

The Acyl-thioester intermediate role is filled by Cys-90. Active-site proton acceptor residues include His-357 and Cys-387.

The protein belongs to the thiolase-like superfamily. Thiolase family.

It catalyses the reaction succinyl-CoA + acetyl-CoA = 3-oxoadipyl-CoA + CoA. It functions in the pathway aromatic compound metabolism; beta-ketoadipate pathway; acetyl-CoA and succinyl-CoA from 3-oxoadipate: step 2/2. Functionally, catalyzes thiolytic cleavage of beta-ketoadipyl-CoA to succinyl-CoA and acetyl-CoA. The chain is Beta-ketoadipyl-CoA thiolase (pcaF) from Acinetobacter baylyi (strain ATCC 33305 / BD413 / ADP1).